Reading from the N-terminus, the 79-residue chain is Small ribosomal subunit protein bS18c (79 aa).

This sequence belongs to the bacterial ribosomal protein bS18 family. As to quaternary structure, part of the 30S ribosomal subunit.

The protein resides in the plastid. The protein localises to the chloroplast. This chain is Small ribosomal subunit protein bS18c, found in Chaetosphaeridium globosum (Charophycean green alga).